The sequence spans 348 residues: MIILGLETSCDETSGAVLVDGEVRSNVVSSQLCHKGFGGVVPELASREHERLIVPITEAALAEANITKKDIDVIAATAGPGLIGAVMVGLSFAQSMAWALGVPFVAVNHVEAHMFSPFIDQETAGGGPIGPFISLTVSGGHTLLAIVREDLTYRIIGRTLDDAAGEAFDKTGKMLGLPYPAGPAIDRLAKEGDAGFHRFPRALTSQSQTSRSYRDNFDFSFSGLKTSVLTWLRSQKEEFIHEHRADIAASIQDAIVGVLVEKAVGAARRHNIGAIAVAGGVSANSELRRAMDAACRKHGIALFIPSATYSTDNAAMIATLAGLKLSRGLQPLCRYDTAPFASFSAAGN.

Fe cation-binding residues include histidine 109 and histidine 113. Residues 136–140, aspartate 169, glycine 182, aspartate 186, and asparagine 284 contribute to the substrate site; that span reads TVSGG. Aspartate 312 is a Fe cation binding site.

The protein belongs to the KAE1 / TsaD family. The cofactor is Fe(2+).

It localises to the cytoplasm. It catalyses the reaction L-threonylcarbamoyladenylate + adenosine(37) in tRNA = N(6)-L-threonylcarbamoyladenosine(37) in tRNA + AMP + H(+). Required for the formation of a threonylcarbamoyl group on adenosine at position 37 (t(6)A37) in tRNAs that read codons beginning with adenine. Is involved in the transfer of the threonylcarbamoyl moiety of threonylcarbamoyl-AMP (TC-AMP) to the N6 group of A37, together with TsaE and TsaB. TsaD likely plays a direct catalytic role in this reaction. The polypeptide is tRNA N6-adenosine threonylcarbamoyltransferase (Chlorobium luteolum (strain DSM 273 / BCRC 81028 / 2530) (Pelodictyon luteolum)).